Reading from the N-terminus, the 541-residue chain is MSLNVLFVASEAVPLAKTGGLGDMVGACAGALQRAGLHVTVMLPGYPAAQAQLRDARVACALPDLPGGPARVLLGAMPDTGVPVLLLDAPALFDRPGNPYLDACGEPYADNALRFAAFSHAAAHVAGGVPDLPAFDIVQAHDWHAALVPLLVKRAGRPVKTVLTVHNLAFQGNFPPRIAQDLGLPPEAVREAGFFGQFSFLKAGLMWADRITTVSRTYAREILTDAFGYGMQDVLRARRHDLVAILNGIDNAVWNPSKDAYLSRPFFAGNLSGKHAAKLQLQTLLRLPKDAHAPLLALGSRLTHQKMADVALQALPQMLEAHPDLQVAVLGCGERRYESAMAALAERHPRRMAAVIGYTERNAHMLHAGADLLLHGSRFEPCGLTPLYAMRYGTVPVASRVGGLVDTIADRGSPEAALRGATGFLFDGETPEAMAGAVARALRVFVQPRAWRVLQYNGMTTDFGWSQPASEYLALYATLAPRATPMPHLQHWPMRTLARPASPPDTAPVGKPARRRRTTALSTTARAHPVARAAGREKIRA.

K17 contacts ADP-alpha-D-glucose. The segment at 497–541 (LARPASPPDTAPVGKPARRRRTTALSTTARAHPVARAAGREKIRA) is disordered.

It belongs to the glycosyltransferase 1 family. Bacterial/plant glycogen synthase subfamily.

It carries out the reaction [(1-&gt;4)-alpha-D-glucosyl](n) + ADP-alpha-D-glucose = [(1-&gt;4)-alpha-D-glucosyl](n+1) + ADP + H(+). It participates in glycan biosynthesis; glycogen biosynthesis. In terms of biological role, synthesizes alpha-1,4-glucan chains using ADP-glucose. The sequence is that of Glycogen synthase from Ralstonia nicotianae (strain ATCC BAA-1114 / GMI1000) (Ralstonia solanacearum).